A 300-amino-acid polypeptide reads, in one-letter code: uncharacterized protein (300 aa).

4 consecutive CBS domains span residues 10 to 68, 88 to 148, 152 to 207, and 226 to 284; these read RFPP…FRDV, FLKY…HVKV, MTSE…EDVL, and ISSK…GVEI.

This is an uncharacterized protein from Thermofilum pendens.